Here is a 274-residue protein sequence, read N- to C-terminus: N-acetylmuramic acid 6-phosphate etherase (274 aa).

The region spanning 54–217 (IIPRIDSGGR…STSVMIKLGR (164 aa)) is the SIS domain. Glutamate 82 serves as the catalytic Proton donor. Glutamate 113 is a catalytic residue.

It belongs to the GCKR-like family. MurNAc-6-P etherase subfamily. In terms of assembly, homodimer.

It carries out the reaction N-acetyl-D-muramate 6-phosphate + H2O = N-acetyl-D-glucosamine 6-phosphate + (R)-lactate. Its pathway is amino-sugar metabolism; N-acetylmuramate degradation. Specifically catalyzes the cleavage of the D-lactyl ether substituent of MurNAc 6-phosphate, producing GlcNAc 6-phosphate and D-lactate. This is N-acetylmuramic acid 6-phosphate etherase from Christiangramia forsetii (strain DSM 17595 / CGMCC 1.15422 / KT0803) (Gramella forsetii).